A 346-amino-acid chain; its full sequence is MNSEKNSISYRDAGVDIEAGDALVERIKPFAKRTMRPEVLGGIGGFGSLFEVPKKFKNPVLVSGTDGVGTKLKLAFQLNKHDTVGIDLVAMSVNDILVQGAEPLFFLDYFACGKLDVDTAAQVVQGIAAGCEQSGCALVGGETAEMPGMYPAGEYDLAGFVVGAADKDALIDGSTIAEGDVVLGLASNGAHSNGYSLVRKLIDLSGVDLESDFYGRPFRDVVMAPTRIYVKPILKLLQAIKVKGMAHITGGGITENVPRVLPEGLTAEVRQGSWEIPPLFSWLQEQGNITDQEMYRTFNCGIGMVVIVSAQDVAAAKALLSAEGEQVWEIGRIRAQGAGEAQTVVV.

The protein belongs to the AIR synthase family.

The protein localises to the cytoplasm. It carries out the reaction 2-formamido-N(1)-(5-O-phospho-beta-D-ribosyl)acetamidine + ATP = 5-amino-1-(5-phospho-beta-D-ribosyl)imidazole + ADP + phosphate + H(+). It functions in the pathway purine metabolism; IMP biosynthesis via de novo pathway; 5-amino-1-(5-phospho-D-ribosyl)imidazole from N(2)-formyl-N(1)-(5-phospho-D-ribosyl)glycinamide: step 2/2. The chain is Phosphoribosylformylglycinamidine cyclo-ligase from Methylobacillus flagellatus (strain ATCC 51484 / DSM 6875 / VKM B-1610 / KT).